We begin with the raw amino-acid sequence, 365 residues long: Outer capsid protein sigma-3 (365 aa).

Residues 51–73 (CMHCLGVVGSLQRKLKHLPHHRC) form a CCHC-type zinc finger.

This sequence belongs to the orthoreovirus sigma-3 protein family. Heterohexamer of three sigma-3 and three Mu-1 proteins. The RNA-binding form is probably a homodimer. Cleaved during virus the endosomal proteolytic disassembly of the outer capsid.

The protein resides in the virion. Stimulates translation by blocking the activation of the dsRNA-dependent protein kinase EIF2AK2/PKR, thereby inhibiting the host interferon response. Sigma3 prevents the activation of EIF2AK2 by competing with the kinase for dsRNA-binding. Functionally, the viral outer shell polypeptides, of which sigma-3 is one, impose structural constraints that prevent elongation of nascent transcripts by the RNA-dependent RNA polymerase lambda-3. The sequence is that of Outer capsid protein sigma-3 (S4) from Mammalia (T1L).